A 332-amino-acid chain; its full sequence is 3-ketodihydrosphingosine reductase (332 aa).

Residues 1-25 form the signal peptide; the sequence is MLLLAAASLVAFVLLLYMVSPLISP. At 26–269 the chain is on the cytoplasmic side; it reads KPLALPGAHV…QGNFNSSIGS (244 aa). Residues G39, S41, S42, G43, R64, K68, and D93 each contribute to the NADPH site. The GXSXG motif lies at 39–43; the sequence is GGSSG. S172 serves as the catalytic Proton donor. Y186 serves as the catalytic Proton acceptor. NADP(+) contacts are provided by Y186 and K190. Catalysis depends on K190, which acts as the Lowers pKa of active site Tyr. Residues 270–290 traverse the membrane as a helical segment; the sequence is DGYMLSSLTCGMAPVTSIMEG. Residues 291–292 are Lumenal-facing; that stretch reads LQ. The chain crosses the membrane as a helical span at residues 293 to 313; the sequence is QVVTMGLFRTIALFYLGSFDS. Topologically, residues 314–331 are cytoplasmic; it reads IVRRCMMQKAKLETVDKT.

Belongs to the short-chain dehydrogenases/reductases (SDR) family.

It localises to the endoplasmic reticulum membrane. It carries out the reaction sphinganine + NADP(+) = 3-oxosphinganine + NADPH + H(+). It functions in the pathway lipid metabolism; sphingolipid metabolism. Functionally, catalyzes the reduction of 3'-oxosphinganine (3-ketodihydrosphingosine/KDS) to sphinganine (dihydrosphingosine/DHS), the second step of de novo sphingolipid biosynthesis. The sequence is that of 3-ketodihydrosphingosine reductase (KDSR) from Bos taurus (Bovine).